Reading from the N-terminus, the 373-residue chain is 4-hydroxy-3-methylbut-2-en-1-yl diphosphate synthase (flavodoxin) (373 aa).

[4Fe-4S] cluster contacts are provided by Cys-270, Cys-273, Cys-305, and Glu-312.

The protein belongs to the IspG family. It depends on [4Fe-4S] cluster as a cofactor.

The catalysed reaction is (2E)-4-hydroxy-3-methylbut-2-enyl diphosphate + oxidized [flavodoxin] + H2O + 2 H(+) = 2-C-methyl-D-erythritol 2,4-cyclic diphosphate + reduced [flavodoxin]. It participates in isoprenoid biosynthesis; isopentenyl diphosphate biosynthesis via DXP pathway; isopentenyl diphosphate from 1-deoxy-D-xylulose 5-phosphate: step 5/6. Its function is as follows. Converts 2C-methyl-D-erythritol 2,4-cyclodiphosphate (ME-2,4cPP) into 1-hydroxy-2-methyl-2-(E)-butenyl 4-diphosphate. The protein is 4-hydroxy-3-methylbut-2-en-1-yl diphosphate synthase (flavodoxin) of Vibrio atlanticus (strain LGP32) (Vibrio splendidus (strain Mel32)).